A 745-amino-acid chain; its full sequence is Phosphoribosylformylglycinamidine synthase subunit PurL (745 aa).

His54 is an active-site residue. ATP is bound by residues Tyr57 and Lys96. Glu98 is a binding site for Mg(2+). Residues 99 to 102 (SHNH) and Arg121 contribute to the substrate site. His100 serves as the catalytic Proton acceptor. Position 122 (Asp122) interacts with Mg(2+). Gln250 lines the substrate pocket. Asp278 contacts Mg(2+). 322 to 324 (ESQ) serves as a coordination point for substrate. Residues Asp503 and Gly540 each contribute to the ATP site. Asn541 lines the Mg(2+) pocket. Ser543 is a binding site for substrate.

Belongs to the FGAMS family. As to quaternary structure, monomer. Part of the FGAM synthase complex composed of 1 PurL, 1 PurQ and 2 PurS subunits.

It is found in the cytoplasm. It carries out the reaction N(2)-formyl-N(1)-(5-phospho-beta-D-ribosyl)glycinamide + L-glutamine + ATP + H2O = 2-formamido-N(1)-(5-O-phospho-beta-D-ribosyl)acetamidine + L-glutamate + ADP + phosphate + H(+). Its pathway is purine metabolism; IMP biosynthesis via de novo pathway; 5-amino-1-(5-phospho-D-ribosyl)imidazole from N(2)-formyl-N(1)-(5-phospho-D-ribosyl)glycinamide: step 1/2. Functionally, part of the phosphoribosylformylglycinamidine synthase complex involved in the purines biosynthetic pathway. Catalyzes the ATP-dependent conversion of formylglycinamide ribonucleotide (FGAR) and glutamine to yield formylglycinamidine ribonucleotide (FGAM) and glutamate. The FGAM synthase complex is composed of three subunits. PurQ produces an ammonia molecule by converting glutamine to glutamate. PurL transfers the ammonia molecule to FGAR to form FGAM in an ATP-dependent manner. PurS interacts with PurQ and PurL and is thought to assist in the transfer of the ammonia molecule from PurQ to PurL. This Helicobacter hepaticus (strain ATCC 51449 / 3B1) protein is Phosphoribosylformylglycinamidine synthase subunit PurL.